Here is a 380-residue protein sequence, read N- to C-terminus: N-acetylneuraminate epimerase (380 aa).

An N-terminal signal peptide occupies residues 1–21 (MKFTKTALFTVLAATAFAAQA). 7 Kelch repeats span residues 42 to 86 (TVYV…AGVN), 88 to 140 (KLYV…AADG), 142 to 176 (KIYFVGGVNHEIWNGLFQDVKAAGGDKEKEKAIFD), 177 to 222 (PYFN…AIKD), 225 to 274 (LLVV…IAGG), 296 to 349 (ANYE…SYNN), and 351 to 380 (VLLIGGETDGGKPLSAVQTMSYDGKKLTVE). Glu-231 functions as the Proton acceptor in the catalytic mechanism.

The protein belongs to the NanM family. Homodimer.

It is found in the periplasm. It carries out the reaction N-acetyl-alpha-neuraminate = N-acetyl-beta-neuraminate. In terms of biological role, converts alpha-N-acetylneuranimic acid (Neu5Ac) to the beta-anomer, accelerating the equilibrium between the alpha- and beta-anomers. Probably facilitates sialidase-negative bacteria to compete successfully for limited amounts of extracellular Neu5Ac, which is likely taken up in the beta-anomer. In addition, the rapid removal of sialic acid from solution might be advantageous to the bacterium to damp down host responses. The protein is N-acetylneuraminate epimerase of Pasteurella multocida (strain Pm70).